The primary structure comprises 642 residues: 1-deoxy-D-xylulose-5-phosphate synthase (642 aa).

Thiamine diphosphate-binding positions include His-79 and 120–122; that span reads AHS. Asp-151 serves as a coordination point for Mg(2+). Thiamine diphosphate-binding positions include 152–153, Asn-180, Tyr-290, and Glu-372; that span reads GS. Asn-180 contributes to the Mg(2+) binding site.

Belongs to the transketolase family. DXPS subfamily. As to quaternary structure, homodimer. It depends on Mg(2+) as a cofactor. Thiamine diphosphate serves as cofactor.

The enzyme catalyses D-glyceraldehyde 3-phosphate + pyruvate + H(+) = 1-deoxy-D-xylulose 5-phosphate + CO2. It participates in metabolic intermediate biosynthesis; 1-deoxy-D-xylulose 5-phosphate biosynthesis; 1-deoxy-D-xylulose 5-phosphate from D-glyceraldehyde 3-phosphate and pyruvate: step 1/1. Functionally, catalyzes the acyloin condensation reaction between C atoms 2 and 3 of pyruvate and glyceraldehyde 3-phosphate to yield 1-deoxy-D-xylulose-5-phosphate (DXP). The protein is 1-deoxy-D-xylulose-5-phosphate synthase of Beijerinckia indica subsp. indica (strain ATCC 9039 / DSM 1715 / NCIMB 8712).